A 271-amino-acid chain; its full sequence is Purine nucleoside phosphorylase 1 (271 aa).

Phosphate-binding positions include S28, H59, 79–81, and A111; that span reads RFH. S28 carries the phosphoserine modification. E191 serves as a coordination point for a purine D-ribonucleoside. Phosphate is bound at residue S210. N233 provides a ligand contact to a purine D-ribonucleoside.

This sequence belongs to the PNP/MTAP phosphorylase family. As to quaternary structure, homotrimer.

The catalysed reaction is a purine 2'-deoxy-D-ribonucleoside + phosphate = a purine nucleobase + 2-deoxy-alpha-D-ribose 1-phosphate. It participates in purine metabolism; purine nucleoside salvage. Its function is as follows. The purine nucleoside phosphorylases catalyze the phosphorolytic breakdown of the N-glycosidic bond in the beta-(deoxy)ribonucleoside molecules, with the formation of the corresponding free purine bases and pentose-1-phosphate. Cleaves guanosine, inosine, 2'-deoxyguanosine and 2'-deoxyinosine. The polypeptide is Purine nucleoside phosphorylase 1 (punA) (Bacillus subtilis (strain 168)).